Here is a 397-residue protein sequence, read N- to C-terminus: Probable inactive purple acid phosphatase 28 (397 aa).

The signal sequence occupies residues 1 to 30; it reads MNCSIGNWKHTVLYLTLIVSLLYFIESLIS. N91 and N209 each carry an N-linked (GlcNAc...) asparagine glycan. Zn(2+)-binding residues include H266 and H314. 314–316 serves as a coordination point for substrate; sequence HDH. H316 contacts Fe cation.

It belongs to the metallophosphoesterase superfamily. Purple acid phosphatase family. As to quaternary structure, homodimer. The cofactor is Fe cation. Requires Zn(2+) as cofactor. Expressed in roots, stems, leaves, flowers and siliques.

Its subcellular location is the secreted. The chain is Probable inactive purple acid phosphatase 28 (PAP28) from Arabidopsis thaliana (Mouse-ear cress).